The chain runs to 311 residues: tRNA dimethylallyltransferase 2 (311 aa).

Position 15–22 (15–22 (GPTAVGKT)) interacts with ATP. Residue 17–22 (TAVGKT) participates in substrate binding. The interaction with substrate tRNA stretch occupies residues 40 to 43 (DSMQ).

It belongs to the IPP transferase family. As to quaternary structure, monomer. Mg(2+) serves as cofactor.

The catalysed reaction is adenosine(37) in tRNA + dimethylallyl diphosphate = N(6)-dimethylallyladenosine(37) in tRNA + diphosphate. In terms of biological role, catalyzes the transfer of a dimethylallyl group onto the adenine at position 37 in tRNAs that read codons beginning with uridine, leading to the formation of N6-(dimethylallyl)adenosine (i(6)A). The chain is tRNA dimethylallyltransferase 2 from Syntrophus aciditrophicus (strain SB).